The following is a 140-amino-acid chain: Probable disulfide formation protein C 2 (140 aa).

Residues 6–25 traverse the membrane as a helical segment; sequence KYHIAIAWTIATSAMLISLI. A disulfide bridge connects residues cysteine 35 and cysteine 38. 2 helical membrane-spanning segments follow: residues 40-59 and 66-83; these read YQRM…MYRK and YAFP…YQIT. Cysteine 95 and cysteine 101 are joined by a disulfide. The helical transmembrane segment at 110 to 134 threads the bilayer; sequence GFISIPMLSFVGFLAIIILLYINQI.

Belongs to the DsbB family. BdbC subfamily.

The protein resides in the cell membrane. In terms of biological role, required for disulfide bond formation in some proteins. This chain is Probable disulfide formation protein C 2 (bdbC2), found in Bacillus anthracis.